The primary structure comprises 227 residues: Ubiquitin domain-containing protein 1 (227 aa).

The interval Met1–Lys35 is disordered. A compositionally biased stretch (basic and acidic residues) spans Gly24–Lys35. The region spanning Phe149–Pro224 is the Ubiquitin-like domain.

In terms of assembly, interacts with UBTD1.

May be involved in the regulation of cellular senescence through a positive feedback loop with TP53. Is a TP53 downstream target gene that increases the stability of TP53 protein by promoting the ubiquitination and degradation of MDM2. This chain is Ubiquitin domain-containing protein 1 (UBTD1), found in Homo sapiens (Human).